The sequence spans 216 residues: Adenylate kinase (216 aa).

Residue 10–15 (GAGKGT) participates in ATP binding. An NMP region spans residues 30–59 (STGDIFRKNISNKTPLGMEAKSYMDKGQLV). AMP is bound by residues Thr-31, Arg-36, 57–59 (QLV), 85–88 (GFPR), and Gln-92. Residues 126 to 163 (GRRVCGECGASYHIKFITPKTEGVCDLCGGKLVQRKDD) form an LID region. Arg-127 lines the ATP pocket. Cys-130 and Cys-133 together coordinate Zn(2+). An ATP-binding site is contributed by 136-137 (SY). Zn(2+)-binding residues include Cys-150 and Cys-153. Arg-160 and Arg-171 together coordinate AMP. An ATP-binding site is contributed by Lys-199.

This sequence belongs to the adenylate kinase family. As to quaternary structure, monomer.

It is found in the cytoplasm. The enzyme catalyses AMP + ATP = 2 ADP. Its pathway is purine metabolism; AMP biosynthesis via salvage pathway; AMP from ADP: step 1/1. Its function is as follows. Catalyzes the reversible transfer of the terminal phosphate group between ATP and AMP. Plays an important role in cellular energy homeostasis and in adenine nucleotide metabolism. The polypeptide is Adenylate kinase (Clostridium tetani (strain Massachusetts / E88)).